Reading from the N-terminus, the 219-residue chain is Transcriptional regulator AcuR (219 aa).

The disordered stretch occupies residues 1–25; sequence MPLTDTPPSVPQKPRRGRPRGAPDA. Positions 26 to 86 constitute an HTH tetR-type domain; that stretch reads SLAHQSLIRA…ALIEAYDTYF (61 aa). Residues 49-68 constitute a DNA-binding region (H-T-H motif); that stretch reads GVDEILKAARVPKGSFYHYF.

In terms of biological role, a transcriptional repressor for its operon. Probably binds to 2 operator sequences in the promoter. This Cereibacter sphaeroides (strain ATCC 17023 / DSM 158 / JCM 6121 / CCUG 31486 / LMG 2827 / NBRC 12203 / NCIMB 8253 / ATH 2.4.1.) (Rhodobacter sphaeroides) protein is Transcriptional regulator AcuR (acuR).